The primary structure comprises 678 residues: DNA ligase (678 aa).

NAD(+)-binding positions include 35 to 39 (DSVYD), 84 to 85 (SL), and E116. The N6-AMP-lysine intermediate role is filled by K118. R139, E178, K297, and K321 together coordinate NAD(+). Positions 415, 418, 433, and 438 each coordinate Zn(2+). The region spanning 600 to 678 (DGNQIFAGKT…EAQLLEMLNE (79 aa)) is the BRCT domain.

This sequence belongs to the NAD-dependent DNA ligase family. LigA subfamily. Requires Mg(2+) as cofactor. Mn(2+) serves as cofactor.

The enzyme catalyses NAD(+) + (deoxyribonucleotide)n-3'-hydroxyl + 5'-phospho-(deoxyribonucleotide)m = (deoxyribonucleotide)n+m + AMP + beta-nicotinamide D-nucleotide.. Functionally, DNA ligase that catalyzes the formation of phosphodiester linkages between 5'-phosphoryl and 3'-hydroxyl groups in double-stranded DNA using NAD as a coenzyme and as the energy source for the reaction. It is essential for DNA replication and repair of damaged DNA. The polypeptide is DNA ligase (Nostoc punctiforme (strain ATCC 29133 / PCC 73102)).